Reading from the N-terminus, the 600-residue chain is UvrABC system protein C (600 aa).

One can recognise a GIY-YIG domain in the interval 15-92 (EKPGCYLMKD…IKKYQPYYNV (78 aa)). A UVR domain is found at 197–232 (TSVKQDLTTKMEKASENLEFERAAEIRDQLKYIEET).

It belongs to the UvrC family. As to quaternary structure, interacts with UvrB in an incision complex.

It is found in the cytoplasm. The UvrABC repair system catalyzes the recognition and processing of DNA lesions. UvrC both incises the 5' and 3' sides of the lesion. The N-terminal half is responsible for the 3' incision and the C-terminal half is responsible for the 5' incision. The protein is UvrABC system protein C of Lactobacillus acidophilus (strain ATCC 700396 / NCK56 / N2 / NCFM).